Reading from the N-terminus, the 710-residue chain is Cyclin-dependent kinase G-2 (710 aa).

Positions 1–350 (MAAGRHGGYR…ETPEPVKPPH (350 aa)) are disordered. Residues 8 to 30 (GYRDYEARERELDAEASRRSKEQ) show a composition bias toward basic and acidic residues. Basic residues predominate over residues 31–40 (QHHHHPSGRH). Positions 41–64 (QRGDSDPRCEADRRRDGGRSRGGR) are enriched in basic and acidic residues. Residues 124 to 133 (SVVAASASSP) are compositionally biased toward low complexity. Basic and acidic residues predominate over residues 144–163 (WDRDSPKPMHSDVAKGKKAV). The span at 170–182 (LPLPPPPPLPPQD) shows a compositional bias: pro residues. Basic and acidic residues-rich tracts occupy residues 183–195 (HIPE…KSPM) and 209–218 (LQEHAESRVM). Residues 299–308 (DENEDLEVDK) are compositionally biased toward acidic residues. Over residues 335-344 (YEVRRSETPE) the composition is skewed to basic and acidic residues. The region spanning 365 to 656 (FERLNKINEG…ADAALQHEWF (292 aa)) is the Protein kinase domain. ATP is bound by residues 371–379 (INEGTYGVV) and lysine 394. A Phosphothreonine modification is found at threonine 375. A Phosphotyrosine modification is found at tyrosine 376. Aspartate 489 functions as the Proton acceptor in the catalytic mechanism. Serine 516 carries the phosphoserine modification. A Phosphothreonine modification is found at threonine 522.

The protein belongs to the protein kinase superfamily. CMGC Ser/Thr protein kinase family. CDC2/CDKX subfamily.

It catalyses the reaction L-seryl-[protein] + ATP = O-phospho-L-seryl-[protein] + ADP + H(+). The catalysed reaction is L-threonyl-[protein] + ATP = O-phospho-L-threonyl-[protein] + ADP + H(+). It carries out the reaction [DNA-directed RNA polymerase] + ATP = phospho-[DNA-directed RNA polymerase] + ADP + H(+). This Oryza sativa subsp. indica (Rice) protein is Cyclin-dependent kinase G-2 (CDKG-2).